The sequence spans 76 residues: ATP synthase subunit 9, mitochondrial (76 aa).

An N-formylmethionine modification is found at M1. 2 helical membrane-spanning segments follow: residues 14-34 (IATI…AALI) and 52-72 (ILGF…SFLL).

F-type ATP synthases have 2 components, the catalytic core F(1) and the membrane-embedded component F(0), linked together by a central stalk and a peripheral stalk. The central stalk, also called rotor shaft, is often seen as part of F(1). The peripheral stalk is seen as part of F(0). F(0) contains the membrane channel next to the rotor. F-type ATP synthases form dimers but each monomer functions independently in ATP generation. The dimer consists of 18 different polypeptides: ATP1 (subunit alpha, part of F(1), 3 molecules per monomer), ATP2 (subunit beta, part of F(1), 3 molecules per monomer), ATP3 (subunit gamma, part of the central stalk), ATP4 (subunit b, part of the peripheral stalk), ATP5/OSCP (subunit 5/OSCP, part of the peripheral stalk), ATP6 (subunit a, part of the peripheral stalk), ATP7 (subunit d, part of the peripheral stalk), ATP8 (subunit 8, part of the peripheral stalk), OLI1 (subunit c, part of the rotor, 10 molecules per monomer), ATP14 (subunit h, part of the peripheral stalk), ATP15 (subunit epsilon, part of the central stalk), ATP16 (subunit delta, part of the central stalk), ATP17 (subunit f, part of the peripheral stalk), ATP18 (subunit i/j, part of the peripheral stalk). Dimer-specific subunits are ATP19 (subunit k, at interface between monomers), ATP20 (subunit g, at interface between monomers), TIM11 (subunit e, at interface between monomers). Also contains subunit L.

It is found in the mitochondrion inner membrane. Mitochondrial membrane ATP synthase (F(1)F(0) ATP synthase or Complex V) produces ATP from ADP in the presence of a proton gradient across the membrane which is generated by electron transport complexes of the respiratory chain. F-type ATP synthases consist of two structural domains, F(1) - containing the extramembraneous catalytic core, and F(0) - containing the membrane proton channel, linked together by a central stalk and a peripheral stalk. During catalysis, ATP synthesis in the catalytic domain of F(1) is coupled via a rotary mechanism of the central stalk subunits to proton translocation. Part of the complex F(0) domain. A homomeric c-ring of 10 OLI1/ATP9 subunits is part of the complex rotary element. The chain is ATP synthase subunit 9, mitochondrial from Pichia angusta (Yeast).